The chain runs to 453 residues: Ribosomal protein uS12 methylthiotransferase RimO (453 aa).

Residues 6–116 (PKVGFVSLGC…VMEAVHEALP (111 aa)) enclose the MTTase N-terminal domain. The [4Fe-4S] cluster site is built by Cys15, Cys51, Cys80, Cys147, Cys151, and Cys154. A Radical SAM core domain is found at 133–370 (LTPRHYAYLK…MEKQAQISAA (238 aa)). The TRAM domain occupies 373–441 (EAKIGTVQQC…DHDLYGDALP (69 aa)).

This sequence belongs to the methylthiotransferase family. RimO subfamily. The cofactor is [4Fe-4S] cluster.

It localises to the cytoplasm. The enzyme catalyses L-aspartate(89)-[ribosomal protein uS12]-hydrogen + (sulfur carrier)-SH + AH2 + 2 S-adenosyl-L-methionine = 3-methylsulfanyl-L-aspartate(89)-[ribosomal protein uS12]-hydrogen + (sulfur carrier)-H + 5'-deoxyadenosine + L-methionine + A + S-adenosyl-L-homocysteine + 2 H(+). In terms of biological role, catalyzes the methylthiolation of an aspartic acid residue of ribosomal protein uS12. The sequence is that of Ribosomal protein uS12 methylthiotransferase RimO from Stenotrophomonas maltophilia (strain R551-3).